The following is a 1035-amino-acid chain: Cell-division control histidine kinase PdhS (1035 aa).

An important for polar localization region spans residues 1-613 (MSGSYPFIDI…HADGSEEPVD (613 aa)). The segment at 500–533 (QGLANTRAESETPVSETSSIEPVEPTPPVKTRSE) is disordered. Positions 614 to 1035 (AHLNAIAWRG…VFPPTRVLAD (422 aa)) are interaction with DivK. One can recognise a PAS domain in the interval 659–730 (HVEELKTILD…YLHGLSGNGV (72 aa)). One can recognise a Histidine kinase domain in the interval 802–1031 (RISHEIRTPL…VVEIVFPPTR (230 aa)). H805 is modified (phosphohistidine; by autocatalysis).

In terms of assembly, interacts with DivK.

The protein localises to the cytoplasm. It carries out the reaction ATP + protein L-histidine = ADP + protein N-phospho-L-histidine.. Functions as a polar differentiation marker. Essential protein that, by localizing in the old pole of dividing cells, controls cell division and maturation, probably through control of DivK phosphorylation status and cellular distribution, which in turn regulates CtrA, a transcriptional regulator of the minB operon. The asymmetrical localization of this protein is probably required for cells to enter a new division cycle. This is Cell-division control histidine kinase PdhS (pdhS) from Brucella suis biovar 1 (strain 1330).